We begin with the raw amino-acid sequence, 1828 residues long: InaD-like protein (1828 aa).

An L27 domain is found at 5–65; the sequence is PAPDKLQVLQ…SIKQLKGQLS (61 aa). PDZ domains follow at residues 134-221, 248-328, and 365-453; these read YIDI…AREP, DVEL…ARDP, and GVEL…VRRK. A phosphoserine mark is found at serine 459 and serine 522. In terms of domain architecture, PDZ 4 spans 553–639; the sequence is DAELQKYSKL…PFTLVCCRRL (87 aa). Phosphoserine is present on serine 645. 2 consecutive PDZ domains span residues 686-758 and 1070-1162; these read IVEL…EVLK and IVEI…QSLS. The disordered stretch occupies residues 1168-1220; it reads IPSVHNKANKIANNQDQNTEEKKEKRQGTPPPPMKLPPPYKAPSDDSDENEEE. The segment covering 1196–1208 has biased composition (pro residues); sequence TPPPPMKLPPPYK. Residue serine 1211 is modified to Phosphoserine. The PDZ 7 domain occupies 1241-1324; sequence IIELEKDKNG…KVKLVFIRNE (84 aa). Residues 1333–1362 are disordered; sequence APFPVPSSSPSSLEDQSGTEPVSSEEDGSL. The segment covering 1345 to 1354 has biased composition (polar residues); that stretch reads LEDQSGTEPV. PDZ domains follow at residues 1464 to 1547 and 1560 to 1642; these read IIEI…YRDE and PVDL…GRLR. A Phosphothreonine modification is found at threonine 1535. Positions 1645–1668 are enriched in polar residues; it reads SWTSSRKTSQNSQGSQHSTHSSFH. A disordered region spans residues 1645–1669; the sequence is SWTSSRKTSQNSQGSQHSTHSSFHP. One can recognise a PDZ 10 domain in the interval 1703 to 1789; it reads TVEIIRELSD…RIILQVVADT (87 aa). The disordered stretch occupies residues 1805–1828; the sequence is YHLGSPTAEHHPEDTEEPLQMTAG.

Forms a ternary complex with PALS1 and CRB1. Component of a complex whose core is composed of ARHGAP17, AMOT, PALS1, INADL/PATJ and PARD3/PAR3. Forms a heterotrimeric complex composed of MMP5, LIN7B and PATJ; the N-terminal L27 domain of PALS1 interacts with the L27 domain of PATJ and the C-terminal L27 domain of PALS1 interacts with the L27 domain of LIN7B. Component of a complex composed of CRB3, PALS1 and PATJ. As part of the Crumbs complex; interacts with WWP1, the interaction is enhanced by AMOTL2 and facilitates WWP1 localization to the plasma membrane. The Crumbs complex promotes monoubiquitination of AMOTL2 by WWP1, which activates the Hippo signaling pathway. Interacts (via N-terminus) with PALS1/PALS (via PDZ domain). Interacts with TJP3/ZO-3 and CLDN1/claudin-1. Interacts with ASIC3, KCNJ10, KCNJ15, GRIN2A, GRIN2B, GRIN2C, GRIN2D, NLGN2, and HTR2A. Interacts with MPP7. Directly interacts with HTR4. Interacts (via PDZ domain 8) with WWC1 (via the ADDV motif). Interacts with SLC6A4. Interacts (via C-terminus) with ARHGEF18. Interacts with NPHP1. Interacts with PARD3/PAR3. Interacts (via PDZ1-6 domains) with TJP1/ZO1; the interaction is required for attachment and extension of TJP1/ZO1 condensates along the apical cell interface.

The protein resides in the cell junction. Its subcellular location is the tight junction. It localises to the apical cell membrane. It is found in the cytoplasm. The protein localises to the perinuclear region. In terms of biological role, scaffolding protein that facilitates the localization of proteins to the cell membrane. Required for the correct formation of tight junctions and epithelial apico-basal polarity. Acts (via its L27 domain) as an apical connector and elongation factor for multistranded TJP1/ZO1 condensates that form a tight junction belt, thereby required for the formation of the tight junction-mediated cell barrier. Positively regulates epithelial cell microtubule elongation and cell migration, possibly via facilitating localization of PRKCI/aPKC and PAR3D/PAR3 at the leading edge of migrating cells. Plays a role in the correct reorientation of the microtubule-organizing center during epithelial migration. May regulate the surface expression and/or function of ASIC3 in sensory neurons. May recruit ARHGEF18 to apical cell-cell boundaries. The chain is InaD-like protein from Canis lupus familiaris (Dog).